Reading from the N-terminus, the 538-residue chain is Cytosolic Fe-S cluster assembly factor NAR1 homolog (538 aa).

8 residues coordinate [4Fe-4S] cluster: cysteine 19, cysteine 64, cysteine 67, cysteine 70, cysteine 218, cysteine 273, cysteine 453, and cysteine 457.

This sequence belongs to the NARF family.

It localises to the cytoplasm. The protein resides in the nucleus. Component of the cytosolic Fe/S protein assembly machinery. Required for maturation of extramitochondrial Fe/S proteins. May play a role in the transfer of pre-assembled Fe/S clusters to target apoproteins. The sequence is that of Cytosolic Fe-S cluster assembly factor NAR1 homolog from Schizosaccharomyces pombe (strain 972 / ATCC 24843) (Fission yeast).